The sequence spans 235 residues: Large ribosomal subunit protein uL1 (235 aa).

Belongs to the universal ribosomal protein uL1 family. In terms of assembly, part of the 50S ribosomal subunit.

Its function is as follows. Binds directly to 23S rRNA. The L1 stalk is quite mobile in the ribosome, and is involved in E site tRNA release. Functionally, protein L1 is also a translational repressor protein, it controls the translation of the L11 operon by binding to its mRNA. The protein is Large ribosomal subunit protein uL1 of Prochlorococcus marinus (strain MIT 9303).